Reading from the N-terminus, the 290-residue chain is Arylamine N-acetyltransferase 2 (290 aa).

Catalysis depends on Cys68, which acts as the Acyl-thioester intermediate. Residues Ser103 and Gly104 each contribute to the CoA site. Ile106 to His107 contacts substrate. Residues His107 and Asp122 contribute to the active site. Tyr208 is a binding site for CoA.

The protein belongs to the arylamine N-acetyltransferase family.

It localises to the cytoplasm. The enzyme catalyses an arylamine + acetyl-CoA = an N-acetylarylamine + CoA. The catalysed reaction is an N-hydroxyarylamine + acetyl-CoA = an N-acetoxyarylamine + CoA. Catalyzes the N- or O-acetylation of various arylamine and heterocyclic amine substrates, and participates in the detoxification of a plethora of hydrazine and arylamine drugs. The protein is Arylamine N-acetyltransferase 2 (NAT2) of Mesocricetus auratus (Golden hamster).